Consider the following 153-residue polypeptide: MSLSLDLDLQIAVDSNQLPSQADFETWVRTALGNTLDTAELTIRLVEIAESQSLNHDYRGKDKPTNVLSFPFEAPPGMELPLLGDLVICVAVVEQEALEQNKPLQAHWAHMVIHGCLHLLGYDHIIDQEAEEMESLETQLIEGLGFSNPYKEA.

The Zn(2+) site is built by His-114, His-118, and His-124.

Belongs to the endoribonuclease YbeY family. Zn(2+) is required as a cofactor.

It is found in the cytoplasm. Single strand-specific metallo-endoribonuclease involved in late-stage 70S ribosome quality control and in maturation of the 3' terminus of the 16S rRNA. This Shewanella denitrificans (strain OS217 / ATCC BAA-1090 / DSM 15013) protein is Endoribonuclease YbeY.